Here is a 287-residue protein sequence, read N- to C-terminus: uncharacterized protein (287 aa).

Helical transmembrane passes span 7–28, 32–54, 67–86, 91–113, 120–139, 144–163, 170–192, 202–224, 231–253, and 263–280; these read LLLTVLAMLAFAGNSLLCRAAL, AIDAVSFTALRLFSGALMLAVLL, GWRGAAALFVYAAAFSYAYV, GTGALLLFGAVQVTLLLAGLLRG, ALLGFLLALGGLLFLLLPGA, LGGALLMLLSGLAWGLYTLL, PLAVSAGNFLRALAFAALLLLAF, GLAYALLSGALASGLGYAVWYSA, IQGASVQLSVPVLAALCGALLLG, and ATLAVLGGIALILAPRLG. 2 EamA domains span residues 15–136 and 155–276; these read LAFA…FLLL and LAWG…LILA.

The protein resides in the cell membrane. This is an uncharacterized protein from Pseudomonas aeruginosa (strain ATCC 15692 / DSM 22644 / CIP 104116 / JCM 14847 / LMG 12228 / 1C / PRS 101 / PAO1).